The chain runs to 143 residues: uncharacterized protein (143 aa).

The 133-residue stretch at 5–137 folds into the HTH marR-type domain; that stretch reads DARLASDLSL…LRSAADLMLA (133 aa). Residues 51 to 74 constitute a DNA-binding region (H-T-H motif); the sequence is PGALAIRERVRPPSMTRVIASLAD.

In terms of assembly, homodimer.

This is an uncharacterized protein from Mycobacterium bovis (strain ATCC BAA-935 / AF2122/97).